The primary structure comprises 218 residues: Large ribosomal subunit protein uL3 (218 aa).

Belongs to the universal ribosomal protein uL3 family. Part of the 50S ribosomal subunit. Forms a cluster with proteins L14 and L19.

In terms of biological role, one of the primary rRNA binding proteins, it binds directly near the 3'-end of the 23S rRNA, where it nucleates assembly of the 50S subunit. The protein is Large ribosomal subunit protein uL3 of Corynebacterium jeikeium (strain K411).